A 157-amino-acid chain; its full sequence is Putative low molecular weight protein-tyrosine-phosphatase slr0328 (157 aa).

Cys-7 (nucleophile) is an active-site residue. Residue Arg-13 is part of the active site. Residue Asp-124 is the Proton donor of the active site.

This sequence belongs to the low molecular weight phosphotyrosine protein phosphatase family.

The catalysed reaction is O-phospho-L-tyrosyl-[protein] + H2O = L-tyrosyl-[protein] + phosphate. The protein is Putative low molecular weight protein-tyrosine-phosphatase slr0328 of Synechocystis sp. (strain ATCC 27184 / PCC 6803 / Kazusa).